The primary structure comprises 583 residues: Peptidyl-prolyl cis-trans isomerase FKBP10 (583 aa).

Residues 1-27 form the signal peptide; sequence MLRAGPPSHTLLRLPLLQLLLLLLVQA. 4 PPIase FKBP-type domains span residues 63–151, 175–263, 287–375, and 400–487; these read GDFV…LDVW, SDFV…IDVH, GDFM…IDFH, and GDFV…VSRE. N-linked (GlcNAc...) asparagine glycosylation is found at N71, N183, and N295. EF-hand domains follow at residues 498 to 533 and 543 to 578; these read WHED…QVSE and DPEK…DQDR. Ca(2+)-binding residues include D511, N513, D515, E517, E522, D556, N558, D560, K562, and E567. Residues 534-583 form a disordered region; it reads GKGRLLPGQDPEKTIGDMFQNQDRNQDGKITAEELKLKSDEDQDRVHEEL. The segment covering 557–583 has biased composition (basic and acidic residues); the sequence is RNQDGKITAEELKLKSDEDQDRVHEEL. A Prevents secretion from ER motif is present at residues 580 to 583; sequence HEEL.

In terms of processing, glycosylated and phosphorylated.

The protein localises to the endoplasmic reticulum lumen. The enzyme catalyses [protein]-peptidylproline (omega=180) = [protein]-peptidylproline (omega=0). Its activity is regulated as follows. Inhibited by both FK506 and rapamycin, but not by cyclosporin A. In terms of biological role, PPIases accelerate the folding of proteins during protein synthesis. The protein is Peptidyl-prolyl cis-trans isomerase FKBP10 (FKBP10) of Bos taurus (Bovine).